The primary structure comprises 228 residues: Lipoprotein-releasing system ATP-binding protein LolD 2 (228 aa).

Residues 9–228 (RGLERVYKTE…KDGHLELQRV (220 aa)) form the ABC transporter domain. 42-49 (GPSGSGKS) serves as a coordination point for ATP.

This sequence belongs to the ABC transporter superfamily. Lipoprotein translocase (TC 3.A.1.125) family. The complex is composed of two ATP-binding proteins (LolD) and two transmembrane proteins (LolC and LolE).

The protein localises to the cell inner membrane. Functionally, part of the ABC transporter complex LolCDE involved in the translocation of mature outer membrane-directed lipoproteins, from the inner membrane to the periplasmic chaperone, LolA. Responsible for the formation of the LolA-lipoprotein complex in an ATP-dependent manner. This chain is Lipoprotein-releasing system ATP-binding protein LolD 2, found in Caulobacter vibrioides (strain ATCC 19089 / CIP 103742 / CB 15) (Caulobacter crescentus).